The following is a 99-amino-acid chain: Large ribosomal subunit protein uL23 (99 aa).

It belongs to the universal ribosomal protein uL23 family. In terms of assembly, part of the 50S ribosomal subunit. Contacts protein L29, and trigger factor when it is bound to the ribosome.

Functionally, one of the early assembly proteins it binds 23S rRNA. One of the proteins that surrounds the polypeptide exit tunnel on the outside of the ribosome. Forms the main docking site for trigger factor binding to the ribosome. In Shewanella loihica (strain ATCC BAA-1088 / PV-4), this protein is Large ribosomal subunit protein uL23.